Reading from the N-terminus, the 541-residue chain is Membrane protein insertase YidC (541 aa).

Helical transmembrane passes span 7–27 (LFLVALLFVSFLIWQAWQTDH), 340–360 (QLIHSFVGNWGFAIIIITFIV), 415–435 (LGGCFPLLIQMPIFLALYYML), 453–473 (LAAPDPFYILPILMGVTMFFI), and 494–514 (PVIFTVFFLWFPSGLVLYYIV).

This sequence belongs to the OXA1/ALB3/YidC family. Type 1 subfamily. Interacts with the Sec translocase complex via SecD. Specifically interacts with transmembrane segments of nascent integral membrane proteins during membrane integration.

The protein localises to the cell inner membrane. In terms of biological role, required for the insertion and/or proper folding and/or complex formation of integral membrane proteins into the membrane. Involved in integration of membrane proteins that insert both dependently and independently of the Sec translocase complex, as well as at least some lipoproteins. Aids folding of multispanning membrane proteins. This is Membrane protein insertase YidC from Edwardsiella ictaluri (strain 93-146).